Here is a 324-residue protein sequence, read N- to C-terminus: tRNA dimethylallyltransferase (324 aa).

15–22 (GPTATGKS) is an ATP binding site. Residue 17–22 (TATGKS) coordinates substrate. The interaction with substrate tRNA stretch occupies residues 40–43 (DSAQ).

It belongs to the IPP transferase family. Monomer. Mg(2+) is required as a cofactor.

It catalyses the reaction adenosine(37) in tRNA + dimethylallyl diphosphate = N(6)-dimethylallyladenosine(37) in tRNA + diphosphate. Functionally, catalyzes the transfer of a dimethylallyl group onto the adenine at position 37 in tRNAs that read codons beginning with uridine, leading to the formation of N6-(dimethylallyl)adenosine (i(6)A). The chain is tRNA dimethylallyltransferase from Moorella thermoacetica (strain ATCC 39073 / JCM 9320).